We begin with the raw amino-acid sequence, 180 residues long: Cytochrome b6-f complex iron-sulfur subunit (180 aa).

The chain crosses the membrane as a helical span at residues 21-43 (LLTFGTITGTALGALYPVVKYFI). The Rieske domain occupies 66–162 (VSEYLAKHLP…ATVTEDDKLV (97 aa)). Residues Cys108, His110, Cys126, and His129 each coordinate [2Fe-2S] cluster. Residues Cys113 and Cys128 are joined by a disulfide bond.

Belongs to the Rieske iron-sulfur protein family. As to quaternary structure, the 4 large subunits of the cytochrome b6-f complex are cytochrome b6, subunit IV (17 kDa polypeptide, PetD), cytochrome f and the Rieske protein, while the 4 small subunits are PetG, PetL, PetM and PetN. The complex functions as a dimer. Requires [2Fe-2S] cluster as cofactor.

It is found in the cellular thylakoid membrane. The enzyme catalyses 2 oxidized [plastocyanin] + a plastoquinol + 2 H(+)(in) = 2 reduced [plastocyanin] + a plastoquinone + 4 H(+)(out). In terms of biological role, component of the cytochrome b6-f complex, which mediates electron transfer between photosystem II (PSII) and photosystem I (PSI), cyclic electron flow around PSI, and state transitions. The sequence is that of Cytochrome b6-f complex iron-sulfur subunit from Thermosynechococcus vestitus (strain NIES-2133 / IAM M-273 / BP-1).